We begin with the raw amino-acid sequence, 585 residues long: Epithelial sodium channel subunit gamma (585 aa).

The Cytoplasmic portion of the chain corresponds to 1–55; it reads MAPGEKIKAKIKKNLPVTGPQAPTIKELMRWYCLNTNTHGCRRIVVSRGRLRRLL. The helical transmembrane segment at 56–76 threads the bilayer; the sequence is WIGFTLTAVALILWQCALLVF. Over 77-477 the chain is Extracellular; the sequence is SFYTVSVSIK…GGQLGLWMSC (401 aa). Disulfide bonds link Cys100-Cys219, Cys308-Cys393, Cys330-Cys389, Cys334-Cys385, Cys343-Cys370, and Cys345-Cys359. N-linked (GlcNAc...) asparagine glycosylation is present at Asn207. N-linked (GlcNAc...) asparagine glycosylation is present at Asn433. A helical transmembrane segment spans residues 478–498; sequence SVVCVIEIIEVFFIDFFSIIA. At 499–585 the chain is on the cytoplasmic side; the sequence is RRQWQKAKEW…LTDTQMLDEL (87 aa). Residues 513 to 534 are disordered; the sequence is QAPPCPEAPRSPQGQDNPALDI. The PY motif; recruits WW domain-containing proteins and is thereby required for ubiquitination and inhibition of the channel by NEDD4 and NEDD4L motif lies at 559–563; the sequence is PPPKY.

Belongs to the amiloride-sensitive sodium channel (TC 1.A.6) family. SCNN1G subfamily. Component of the heterotrimeric epithelial sodium channel (ENaC) composed of an alpha/SCNN1A, a beta/SCNN1B and a gamma/SCNN1G subunit. An additional delta/SCNN1D subunit can replace the alpha/SCNN1A subunit to form an alternative channel with specific properties. Interacts with WWP1 (via WW domains). Interacts with WWP2 (via WW domains); inhibits the channel. Interacts with the full-length immature form of PCSK9 (pro-PCSK9); inhibits ENaC by promoting its proteasomal degradation. Interacts with BPIFA1; the interaction is indirect via SCNN1B and inhibits the proteolytic maturation of SCNN1A and SCNN1G and the activation of ENaC. Post-translationally, phosphorylated on serine and threonine residues. Aldosterone and insulin increase the basal level of phosphorylation. Ubiquitinated. Can be ubiquitinated at multiple sites and undergo monoubiquitination and polyubiquitination. Ubiquitination by NEDD4 or NEDD4L inhibits the ENaC channel through endocytosis, intracellular retention and degradation of its individual subunits. In terms of processing, ENaC is activated through the proteolytic maturation of its subunits. Furin cleaves the SCNN1G subunit first, followed by cleavage by prostasin (PRSS8), which results in a stepwise increase in the open probability of the channel due to the release of an inhibitory tract. BPIFA1, which is recruited by the SCNN1B subunit, prevents the proteolytic activation of ENaC. Post-translationally, N-glycosylated. N-linked glycans are processed to complex type during ENaC complex assembly and transport to the plasma membrane.

It is found in the apical cell membrane. The catalysed reaction is Na(+)(in) = Na(+)(out). With respect to regulation, originally identified and characterized by its inhibition by the diuretic drug amiloride. Its function is as follows. This is one of the three pore-forming subunits of the heterotrimeric epithelial sodium channel (ENaC), a critical regulator of sodium balance and fluid homeostasis. ENaC operates in epithelial tissues, where it mediates the electrodiffusion of sodium ions from extracellular fluid through the apical membrane of cells, with water following osmotically. It plays a key role in maintaining sodium homeostasis through electrogenic sodium reabsorption in the kidneys. Additionally, ENaC is essential for airway surface liquid homeostasis, which is crucial for proper mucus clearance. The protein is Epithelial sodium channel subunit gamma of Pan troglodytes (Chimpanzee).